A 422-amino-acid chain; its full sequence is Monoacylglycerol lipase ABHD2 (422 aa).

Residues 1-15 (MSAQLEADVRTMSPE) are Cytoplasmic-facing. The chain crosses the membrane as a helical; Signal-anchor for type II membrane protein span at residues 16–36 (MPAMFDGMKLAAVAAVLYVIV). Topologically, residues 37–422 (RSLNLKCPTA…HKPQCHQQKE (386 aa)) are extracellular. Residues 134–385 (MVICPGIGNH…HGGHLGFFEG (252 aa)) form the AB hydrolase-1 domain. Asn142 is a glycosylation site (N-linked (GlcNAc...) asparagine). Ser213 functions as the Nucleophile in the catalytic mechanism. N-linked (GlcNAc...) asparagine glycosylation is found at Asn285, Asn335, and Asn344. Active-site charge relay system residues include Asp348 and His379.

It belongs to the AB hydrolase superfamily. AB hydrolase 4 family.

The protein localises to the cell membrane. The enzyme catalyses Hydrolyzes glycerol monoesters of long-chain fatty acids.. The catalysed reaction is an acetyl ester + H2O = an aliphatic alcohol + acetate + H(+). It carries out the reaction a triacylglycerol + H2O = a diacylglycerol + a fatty acid + H(+). It catalyses the reaction 2-(5Z,8Z,11Z,14Z-eicosatetraenoyl)-glycerol + H2O = glycerol + (5Z,8Z,11Z,14Z)-eicosatetraenoate + H(+). The enzyme catalyses a butanoate ester + H2O = an aliphatic alcohol + butanoate + H(+). The catalysed reaction is hexadecanoate ester + H2O = an aliphatic alcohol + hexadecanoate + H(+). Acylglycerol lipase activity is activated upon binding to progesterone. Functionally, progesterone-dependent acylglycerol lipase that catalyzes hydrolysis of endocannabinoid arachidonoylglycerol (AG) from cell membrane. Acts as a progesterone receptor: progesterone-binding activates the acylglycerol lipase activity, mediating degradation of 1-arachidonoylglycerol (1AG) and 2-arachidonoylglycerol (2AG) to glycerol and arachidonic acid (AA). Also displays an ester hydrolase activity against acetyl ester, butanoate ester and hexadecanoate ester. Plays a key role in sperm capacitation in response to progesterone by mediating degradation of 2AG, an inhibitor of the sperm calcium channel CatSper, leading to calcium influx via CatSper and sperm activation. May also play a role in smooth muscle cells migration. The polypeptide is Monoacylglycerol lipase ABHD2 (abhd2b) (Danio rerio (Zebrafish)).